Reading from the N-terminus, the 151-residue chain is D-aminoacyl-tRNA deacylase (151 aa).

Positions 136–137 (GP) match the Gly-cisPro motif, important for rejection of L-amino acids motif.

Belongs to the DTD family. Homodimer.

It localises to the cytoplasm. It carries out the reaction glycyl-tRNA(Ala) + H2O = tRNA(Ala) + glycine + H(+). The catalysed reaction is a D-aminoacyl-tRNA + H2O = a tRNA + a D-alpha-amino acid + H(+). Functionally, an aminoacyl-tRNA editing enzyme that deacylates mischarged D-aminoacyl-tRNAs. Also deacylates mischarged glycyl-tRNA(Ala), protecting cells against glycine mischarging by AlaRS. Acts via tRNA-based rather than protein-based catalysis; rejects L-amino acids rather than detecting D-amino acids in the active site. By recycling D-aminoacyl-tRNA to D-amino acids and free tRNA molecules, this enzyme counteracts the toxicity associated with the formation of D-aminoacyl-tRNA entities in vivo and helps enforce protein L-homochirality. The protein is D-aminoacyl-tRNA deacylase of Streptococcus gordonii (strain Challis / ATCC 35105 / BCRC 15272 / CH1 / DL1 / V288).